The following is a 215-amino-acid chain: Sodium channel regulatory subunit beta-3 (215 aa).

A signal peptide spans 1-22 (MPAFNRLFPLASLLLILWVGVC). Topologically, residues 23–156 (FPVCVEVPSE…EEAGEDFTSV (134 aa)) are extracellular. Intrachain disulfides connect C26/C48 and C45/C120. The Ig-like C2-type domain maps to 32–154 (ETEAVQGNPM…VTEEAGEDFT (123 aa)). N-linked (GlcNAc...) asparagine glycans are attached at residues N95, N109, N113, and N121. The chain crosses the membrane as a helical span at residues 157–178 (VSEIMMYILLVFLTLWLLIEMI). The Cytoplasmic portion of the chain corresponds to 179 to 215 (YCYRKVSKAEEAAQENASDYLAIPSENKENSAVPVEE).

Belongs to the sodium channel auxiliary subunit SCN3B (TC 8.A.17) family. As to quaternary structure, a voltage-gated sodium (Nav) channel consists of an ion-conducting pore-forming alpha subunit functional on its own that is regulated by one or more beta subunits. Forms homodimers and homotrimers. SCN3B is non-covalently associated with alpha subunits and induces the formation of alpha subunit oligomers, including trimers. Interacts with SCN5A/Nav1.5; regulatory subunit of SCN5A/Nav1.5. Interacts with SCN7A/Nav2.1; probable regulatory subunit of SCN7A/Nav2.1. Interacts with SCN10A; regulatory subunit of SCN10A/Nav1.8. Interacts with NFASC; probably involved in targeting the sodium channels to the nodes of Ranvier. In terms of processing, intramolecular disulfide bonds favor the voltage-gated sodium channel oligomeric complex assembly. N-glycosylated.

The protein localises to the cell membrane. Functionally, regulatory subunit of multiple voltage-gated sodium (Nav) channels directly mediating the depolarization of excitable membranes. Navs, also called VGSCs (voltage-gated sodium channels) or VDSCs (voltage-dependent sodium channels), operate by switching between closed and open conformations depending on the voltage difference across the membrane. In the open conformation they allow Na(+) ions to selectively pass through the pore, along their electrochemical gradient. The influx of Na+ ions provokes membrane depolarization, initiating the propagation of electrical signals throughout cells and tissues. The accessory beta subunits participate in localization and functional modulation of the Nav channels. Modulates the activity of SCN2A/Nav1.2, causing a hyperpolarizing shift in the voltage-dependence of inactivation of the channel and increasing the fraction of channels operating in the fast gating mode. Modulates the activity of SCN5A/Nav1.5. Could also regulate the atypical sodium channel SCN7A/Nav2.1. Modulates the activity of SCN10A/Nav1.8, regulating its oligomerization and accelerating the recovery from inactivation. The sequence is that of Sodium channel regulatory subunit beta-3 from Bos taurus (Bovine).